A 205-amino-acid chain; its full sequence is Large ribosomal subunit protein uL4 (205 aa).

Residues 43–60 (ARSGNRAQQTRAEVSAST) show a composition bias toward polar residues. Residues 43-96 (ARSGNRAQQTRAEVSASTHKPWRQKGTGRARSGRASSPIWRGGGVTFPNKPNEN) form a disordered region. A compositionally biased stretch (basic residues) spans 62–74 (KPWRQKGTGRARS).

Belongs to the universal ribosomal protein uL4 family. In terms of assembly, part of the 50S ribosomal subunit.

Functionally, one of the primary rRNA binding proteins, this protein initially binds near the 5'-end of the 23S rRNA. It is important during the early stages of 50S assembly. It makes multiple contacts with different domains of the 23S rRNA in the assembled 50S subunit and ribosome. In terms of biological role, forms part of the polypeptide exit tunnel. The sequence is that of Large ribosomal subunit protein uL4 from Thiobacillus denitrificans (strain ATCC 25259 / T1).